Reading from the N-terminus, the 360-residue chain is Phospho-N-acetylmuramoyl-pentapeptide-transferase (360 aa).

10 helical membrane-spanning segments follow: residues 21-41, 73-93, 94-114, 132-152, 168-188, 199-219, 235-255, 263-283, 288-308, and 338-358; these read YITV…LWIG, TMGG…WANL, ANPY…IGFV, WKYF…YAIG, IMPQ…VGTS, GLAI…AWAT, FSAE…GFLW, VFMG…VAVL, FLLV…ILQV, and VIVR…VTLK.

It belongs to the glycosyltransferase 4 family. MraY subfamily. Requires Mg(2+) as cofactor.

It localises to the cell inner membrane. It carries out the reaction UDP-N-acetyl-alpha-D-muramoyl-L-alanyl-gamma-D-glutamyl-meso-2,6-diaminopimeloyl-D-alanyl-D-alanine + di-trans,octa-cis-undecaprenyl phosphate = di-trans,octa-cis-undecaprenyl diphospho-N-acetyl-alpha-D-muramoyl-L-alanyl-D-glutamyl-meso-2,6-diaminopimeloyl-D-alanyl-D-alanine + UMP. Its pathway is cell wall biogenesis; peptidoglycan biosynthesis. Catalyzes the initial step of the lipid cycle reactions in the biosynthesis of the cell wall peptidoglycan: transfers peptidoglycan precursor phospho-MurNAc-pentapeptide from UDP-MurNAc-pentapeptide onto the lipid carrier undecaprenyl phosphate, yielding undecaprenyl-pyrophosphoryl-MurNAc-pentapeptide, known as lipid I. This Pasteurella multocida (strain Pm70) protein is Phospho-N-acetylmuramoyl-pentapeptide-transferase.